Reading from the N-terminus, the 100-residue chain is MAKKSLIEKENSKKKLVKKYNLLRQFLRREIKNSLRIQDKLIISEKLQSLPRNSARVRLRNRCSLTGRPRSNYRDFGFSRHVLREMAHTCVLPGVLKSSW.

Belongs to the universal ribosomal protein uS14 family. Part of the 30S ribosomal subunit.

The protein resides in the plastid. It is found in the chloroplast. Its function is as follows. Binds 16S rRNA, required for the assembly of 30S particles. The polypeptide is Small ribosomal subunit protein uS14c (Adiantum capillus-veneris (Maidenhair fern)).